The sequence spans 349 residues: Quinone oxidoreductase-like protein 1 (349 aa).

It belongs to the zinc-containing alcohol dehydrogenase family. Quinone oxidoreductase subfamily. As to quaternary structure, homodimer. Component of the FERRY complex composed of five subunits, TBCK, PPP1R21, FERRY3, CRYZL1 and GATD1 with a ratio of 1:2:1:2:4, respectively. Ubiquitous.

It localises to the early endosome. Component of the FERRY complex (Five-subunit Endosomal Rab5 and RNA/ribosome intermediary). The FERRY complex directly interacts with mRNAs and RAB5A, and functions as a RAB5A effector involved in the localization and the distribution of specific mRNAs most likely by mediating their endosomal transport. The complex recruits mRNAs and ribosomes to early endosomes through direct mRNA-interaction. In Homo sapiens (Human), this protein is Quinone oxidoreductase-like protein 1 (CRYZL1).